The chain runs to 289 residues: N-acetylmuramoyl-L-alanine amidase AmiA (289 aa).

Positions 1 to 34 (MSTFKPLKTLTSRRQVLKAGLAALTLSGMSQAIA) form a signal peptide, tat-type signal. The segment at 39–63 (LKTSNGHSKPKAKKSGGKRVVVLDP) is disordered. Over residues 46–55 (SKPKAKKSGG) the composition is skewed to basic residues. A MurNAc-LAA domain is found at 59-273 (VVLDPGHGGI…IATAIAEGVI (215 aa)).

This sequence belongs to the N-acetylmuramoyl-L-alanine amidase 3 family. In terms of processing, exported by the Tat system. The position of the signal peptide cleavage has not been experimentally proven. Can also be exported by the Sec system.

It is found in the periplasm. It carries out the reaction Hydrolyzes the link between N-acetylmuramoyl residues and L-amino acid residues in certain cell-wall glycopeptides.. Its function is as follows. Cell-wall hydrolase involved in septum cleavage during cell division. Can also act as powerful autolysin in the presence of murein synthesis inhibitors. The chain is N-acetylmuramoyl-L-alanine amidase AmiA (amiA) from Escherichia coli (strain K12).